Reading from the N-terminus, the 407-residue chain is Multifunctional CCA protein (407 aa).

ATP-binding residues include G8 and R11. G8 and R11 together coordinate CTP. Mg(2+) contacts are provided by D21 and D23. Residues R91, R137, and R140 each coordinate ATP. The CTP site is built by R91, R137, and R140. In terms of domain architecture, HD spans 228-329; sequence TGVHALMALA…VALFDRVDAW (102 aa).

It belongs to the tRNA nucleotidyltransferase/poly(A) polymerase family. Bacterial CCA-adding enzyme type 1 subfamily. In terms of assembly, monomer. Can also form homodimers and oligomers. Requires Mg(2+) as cofactor. Ni(2+) serves as cofactor.

The catalysed reaction is a tRNA precursor + 2 CTP + ATP = a tRNA with a 3' CCA end + 3 diphosphate. It catalyses the reaction a tRNA with a 3' CCA end + 2 CTP + ATP = a tRNA with a 3' CCACCA end + 3 diphosphate. Functionally, catalyzes the addition and repair of the essential 3'-terminal CCA sequence in tRNAs without using a nucleic acid template. Adds these three nucleotides in the order of C, C, and A to the tRNA nucleotide-73, using CTP and ATP as substrates and producing inorganic pyrophosphate. tRNA 3'-terminal CCA addition is required both for tRNA processing and repair. Also involved in tRNA surveillance by mediating tandem CCA addition to generate a CCACCA at the 3' terminus of unstable tRNAs. While stable tRNAs receive only 3'-terminal CCA, unstable tRNAs are marked with CCACCA and rapidly degraded. The polypeptide is Multifunctional CCA protein (Erwinia tasmaniensis (strain DSM 17950 / CFBP 7177 / CIP 109463 / NCPPB 4357 / Et1/99)).